The sequence spans 388 residues: Succinate--CoA ligase [ADP-forming] subunit beta (388 aa).

One can recognise an ATP-grasp domain in the interval lysine 9 to histidine 244. Residues lysine 46, glycine 53–glycine 55, glutamate 99, threonine 102, and glutamate 107 each bind ATP. Asparagine 199 and aspartate 213 together coordinate Mg(2+). Substrate-binding positions include asparagine 264 and glycine 321 to valine 323.

The protein belongs to the succinate/malate CoA ligase beta subunit family. Heterotetramer of two alpha and two beta subunits. Mg(2+) is required as a cofactor.

It carries out the reaction succinate + ATP + CoA = succinyl-CoA + ADP + phosphate. The catalysed reaction is GTP + succinate + CoA = succinyl-CoA + GDP + phosphate. It functions in the pathway carbohydrate metabolism; tricarboxylic acid cycle; succinate from succinyl-CoA (ligase route): step 1/1. In terms of biological role, succinyl-CoA synthetase functions in the citric acid cycle (TCA), coupling the hydrolysis of succinyl-CoA to the synthesis of either ATP or GTP and thus represents the only step of substrate-level phosphorylation in the TCA. The beta subunit provides nucleotide specificity of the enzyme and binds the substrate succinate, while the binding sites for coenzyme A and phosphate are found in the alpha subunit. The sequence is that of Succinate--CoA ligase [ADP-forming] subunit beta from Shewanella amazonensis (strain ATCC BAA-1098 / SB2B).